A 364-amino-acid polypeptide reads, in one-letter code: E3 ubiquitin-protein ligase rnf146 (364 aa).

Residues Lys-18 to Leu-37 are disordered. Positions Gly-22 to Ser-34 are enriched in low complexity. Residues Cys-42 to Arg-80 form an RING-type zinc finger. The WWE domain maps to Ser-102–Arg-178. A glycoprotein contacts are provided by Tyr-118, Arg-121, Trp-125, Tyr-155, Gln-164, Arg-174, and Lys-186. 2 disordered regions span residues Ala-217–Ser-262 and Asn-279–Val-364. 2 stretches are compositionally biased toward acidic residues: residues Gln-281–Ala-295 and Thr-308–Glu-322.

It is found in the cytoplasm. Its subcellular location is the cytosol. It localises to the nucleus. It catalyses the reaction S-ubiquitinyl-[E2 ubiquitin-conjugating enzyme]-L-cysteine + [acceptor protein]-L-lysine = [E2 ubiquitin-conjugating enzyme]-L-cysteine + N(6)-ubiquitinyl-[acceptor protein]-L-lysine.. It functions in the pathway protein modification; protein ubiquitination. In terms of biological role, E3 ubiquitin-protein ligase that specifically binds poly-ADP-ribosylated proteins and mediates their ubiquitination and subsequent degradation. May regulate many important biological processes, such as cell survival and DNA damage response. Acts as an activator of the Wnt signaling pathway by mediating the ubiquitination of poly-ADP-ribosylated proteins. Neuroprotective protein. Protects against cell death induced by DNA damaging agents and rescues cells from G1 arrest. Promotes cell survival after gamma-irradiation. Facilitates DNA repair. This is E3 ubiquitin-protein ligase rnf146 (rnf146) from Danio rerio (Zebrafish).